A 234-amino-acid chain; its full sequence is Cytochrome b (234 aa).

The next 4 membrane-spanning stretches (helical) occupy residues 33–53 (FGSLLGLCLMIQILTGLFLAM), 77–98 (WLIRYLHANGASMFFICLYMHV), 113–133 (WNIGIILLFAVMATAFMGYVL), and 178–198 (FFAFHFILPFIIAALVMIHLL). Positions 83 and 97 each coordinate heme b. Heme b contacts are provided by His182 and His196. His201 contacts a ubiquinone. A helical transmembrane segment spans residues 226-234 (IKDVLGFLM).

This sequence belongs to the cytochrome b family. The cytochrome bc1 complex contains 11 subunits: 3 respiratory subunits (MT-CYB, CYC1 and UQCRFS1), 2 core proteins (UQCRC1 and UQCRC2) and 6 low-molecular weight proteins (UQCRH/QCR6, UQCRB/QCR7, UQCRQ/QCR8, UQCR10/QCR9, UQCR11/QCR10 and a cleavage product of UQCRFS1). This cytochrome bc1 complex then forms a dimer. Requires heme b as cofactor.

It is found in the mitochondrion inner membrane. Its function is as follows. Component of the ubiquinol-cytochrome c reductase complex (complex III or cytochrome b-c1 complex) that is part of the mitochondrial respiratory chain. The b-c1 complex mediates electron transfer from ubiquinol to cytochrome c. Contributes to the generation of a proton gradient across the mitochondrial membrane that is then used for ATP synthesis. The polypeptide is Cytochrome b (MT-CYB) (Lepus alleni (Antelope jackrabbit)).